Consider the following 185-residue polypeptide: Peptidyl-tRNA hydrolase (185 aa).

Position 14 (Tyr14) interacts with tRNA. His19 serves as the catalytic Proton acceptor. 3 residues coordinate tRNA: Tyr64, Asn66, and Asn112.

Belongs to the PTH family. In terms of assembly, monomer.

It localises to the cytoplasm. The enzyme catalyses an N-acyl-L-alpha-aminoacyl-tRNA + H2O = an N-acyl-L-amino acid + a tRNA + H(+). In terms of biological role, hydrolyzes ribosome-free peptidyl-tRNAs (with 1 or more amino acids incorporated), which drop off the ribosome during protein synthesis, or as a result of ribosome stalling. Its function is as follows. Catalyzes the release of premature peptidyl moieties from peptidyl-tRNA molecules trapped in stalled 50S ribosomal subunits, and thus maintains levels of free tRNAs and 50S ribosomes. This chain is Peptidyl-tRNA hydrolase, found in Lactobacillus helveticus (strain DPC 4571).